The chain runs to 101 residues: Small ribosomal subunit protein uS14 (101 aa).

A disordered region spans residues 50 to 70 (SLPRDSSPSRQRKRCRQTGRP). Positions 59–68 (RQRKRCRQTG) are enriched in basic residues.

This sequence belongs to the universal ribosomal protein uS14 family. In terms of assembly, part of the 30S ribosomal subunit. Contacts proteins S3 and S10.

Binds 16S rRNA, required for the assembly of 30S particles and may also be responsible for determining the conformation of the 16S rRNA at the A site. In Erwinia tasmaniensis (strain DSM 17950 / CFBP 7177 / CIP 109463 / NCPPB 4357 / Et1/99), this protein is Small ribosomal subunit protein uS14.